A 558-amino-acid polypeptide reads, in one-letter code: Thermosome subunit alpha (558 aa).

A disordered region spans residues 536–558; the sequence is TEKGKKEGGEGAGAETPGAPSLE. A compositionally biased stretch (low complexity) spans 548–558; that stretch reads GAETPGAPSLE.

This sequence belongs to the TCP-1 chaperonin family. In terms of assembly, forms a Heterooligomeric complex of two stacked eight-membered rings.

In terms of biological role, molecular chaperone; binds unfolded polypeptides in vitro, and has a weak ATPase activity. The polypeptide is Thermosome subunit alpha (thsA) (Sulfolobus acidocaldarius (strain ATCC 33909 / DSM 639 / JCM 8929 / NBRC 15157 / NCIMB 11770)).